Here is a 225-residue protein sequence, read N- to C-terminus: MMYHIPGVLSPQDVARFREHLEQAEWVDGRVTTGAQGAQVKNNQQVDTRSALYAALQNEVLNAVNQHALFFAAALPRTLSTPLFNRYQNNETYGFHVDGAVRSHPQNGCMRTDLSATLFLSDPESYDGGELVVNDTFGQHRVKLPAGDLVLYPSSSLHCVTPVTRGVRVASFMWIQSMIRDDKKRAMLFELDNNIQSLKSHYGESEEILSLLNLYHNLLREWSEI.

Residues threonine 78–serine 177 form the Fe2OG dioxygenase domain. Fe cation contacts are provided by histidine 96, aspartate 98, and histidine 158. Arginine 168 is a binding site for 2-oxoglutarate.

Requires Fe(2+) as cofactor. L-ascorbate serves as cofactor.

The chain is PKHD-type hydroxylase YbiX from Escherichia coli O6:K15:H31 (strain 536 / UPEC).